A 1066-amino-acid chain; its full sequence is Kinesin-like protein Klp61F (1066 aa).

The Kinesin motor domain maps to 19-356 (NIQVYVRVRP…LEYAHRAKNI (338 aa)). An ATP-binding site is contributed by 103–110 (GQTGTGKT). Residues 362-462 (VNQKLTKKTV…KTEENLLNTK (101 aa)) are a coiled coil. Residue Thr-520 is modified to Phosphothreonine. Coiled coils occupy residues 540–569 (DRMQ…QLSQ), 639–738 (LMSK…QIKN), 808–875 (CSML…LITE), and 889–918 (DLVQ…ELVR). At Thr-933 the chain carries Phosphothreonine. Phosphoserine is present on Ser-949. Polar residues predominate over residues 990–1002 (ELSETETIMNSTP). Disordered stretches follow at residues 990–1009 (ELSE…VDGV) and 1016–1066 (GTTR…ENVA). The span at 1033–1051 (GGKRSSSLSRSLTPSKTSP) shows a compositional bias: low complexity. Phosphoserine is present on Ser-1043. Thr-1045 carries the phosphothreonine modification. A phosphoserine mark is found at Ser-1050 and Ser-1054.

The protein belongs to the TRAFAC class myosin-kinesin ATPase superfamily. Kinesin family. BimC subfamily. In terms of assembly, homotetramer. Consists of two pairs of polypeptides associated by coiled-coil interactions to form two homodimers. The homodimers are linked by lateral interactions between their coiled-coil regions to form a bipolar homotetramer consisting of a central rod with two motor domains projecting from either end. Parallel coiled coils extend from each pair of motor heads, switch to two antiparallel coiled coils in the central region and then back to parallel coiled coils. Interacts with Wee1. Post-translationally, phosphorylation is required for localization to mitotic spindles. Phosphorylation of Thr-933 during mitosis controls association with the spindle apparatus. Phosphorylated in vitro by Wee1.

It is found in the cytoplasm. It localises to the cytoskeleton. The protein resides in the spindle. The protein localises to the spindle pole. Its function is as follows. Important role in mitotic dividing cells. Microtubule motor required for spindle body separation. Slow plus-end directed microtubule motor capable of cross-linking and sliding apart antiparallel microtubules, thereby pushing apart the associated spindle poles during spindle assembly and function. Forms cross-links between microtubules within interpolar microtubule bundles. Contributes to the length of the metaphase spindle, maintains the prometaphase spindle by antagonizing Ncd, drives anaphase B, and also contributes to normal chromosome congression, kinetochore spacing, and anaphase A rates. Displays microtubule-stimulated ATPase activity. Required for normal fusome organization. Required in non-mitotic cells for transport of secretory proteins from the Golgi complex to the cell surface. The polypeptide is Kinesin-like protein Klp61F (Drosophila melanogaster (Fruit fly)).